The primary structure comprises 165 residues: Thiol peroxidase (165 aa).

In terms of domain architecture, Thioredoxin spans 18–165; it reads PQVGDVVTDF…PNYDAALAVL (148 aa). C60 (cysteine sulfenic acid (-SOH) intermediate) is an active-site residue. The cysteines at positions 60 and 94 are disulfide-linked.

It belongs to the peroxiredoxin family. Tpx subfamily. In terms of assembly, homodimer.

The enzyme catalyses a hydroperoxide + [thioredoxin]-dithiol = an alcohol + [thioredoxin]-disulfide + H2O. Functionally, thiol-specific peroxidase that catalyzes the reduction of hydrogen peroxide and organic hydroperoxides to water and alcohols, respectively. Plays a role in cell protection against oxidative stress by detoxifying peroxides. This is Thiol peroxidase from Pasteurella multocida (strain Pm70).